The following is a 376-amino-acid chain: CCA-adding enzyme (376 aa).

G23 and R26 together coordinate ATP. 2 residues coordinate CTP: G23 and R26. Residues E36 and D38 each contribute to the Mg(2+) site. 3 residues coordinate ATP: R106, R152, and R155. 3 residues coordinate CTP: R106, R152, and R155.

This sequence belongs to the tRNA nucleotidyltransferase/poly(A) polymerase family. Bacterial CCA-adding enzyme type 2 subfamily. It depends on Mg(2+) as a cofactor.

The enzyme catalyses a tRNA precursor + 2 CTP + ATP = a tRNA with a 3' CCA end + 3 diphosphate. It catalyses the reaction a tRNA with a 3' CCA end + 2 CTP + ATP = a tRNA with a 3' CCACCA end + 3 diphosphate. In terms of biological role, catalyzes the addition and repair of the essential 3'-terminal CCA sequence in tRNAs without using a nucleic acid template. Adds these three nucleotides in the order of C, C, and A to the tRNA nucleotide-73, using CTP and ATP as substrates and producing inorganic pyrophosphate. tRNA 3'-terminal CCA addition is required both for tRNA processing and repair. Also involved in tRNA surveillance by mediating tandem CCA addition to generate a CCACCA at the 3' terminus of unstable tRNAs. While stable tRNAs receive only 3'-terminal CCA, unstable tRNAs are marked with CCACCA and rapidly degraded. This Coxiella burnetii (strain RSA 331 / Henzerling II) protein is CCA-adding enzyme.